The primary structure comprises 365 residues: DNA replication and repair protein RecF (365 aa).

Position 30-37 (30-37 (GNNGMGKT)) interacts with ATP.

This sequence belongs to the RecF family.

It localises to the cytoplasm. The RecF protein is involved in DNA metabolism; it is required for DNA replication and normal SOS inducibility. RecF binds preferentially to single-stranded, linear DNA. It also seems to bind ATP. This Parabacteroides distasonis (strain ATCC 8503 / DSM 20701 / CIP 104284 / JCM 5825 / NCTC 11152) protein is DNA replication and repair protein RecF.